A 189-amino-acid chain; its full sequence is Parkinson disease protein 7 (189 aa).

A2 carries the N-acetylalanine modification. Residues C46 and C53 are each lipidated (S-palmitoyl cysteine). Position 67 is a phosphotyrosine (Y67). Catalysis depends on C106, which acts as the Nucleophile. Cysteine sulfinic acid (-SO2H); alternate is present on C106. C106 carries the S-palmitoyl cysteine; alternate lipid modification. Residue H126 is part of the active site. A Glycyl lysine isopeptide (Lys-Gly) (interchain with G-Cter in SUMO) cross-link involves residue K130. N6-acetyllysine is present on K148. At K182 the chain carries N6-succinyllysine.

This sequence belongs to the peptidase C56 family. In terms of assembly, homodimer. Binds EFCAB6/DJBP and PIAS2. Part of a ternary complex containing PARK7, EFCAB6/DJBP and AR. Interacts (via N-terminus) with OTUD7B. Interacts with BBS1, HIPK1, CLCF1 and MTERF. Forms a complex with PINK1 and PRKN. Interacts (via C-terminus) with NCF1; the interaction is enhanced by LPS and modulates NCF1 phosphorylation and membrane translocation. Interacts with NENF. The cofactor is Deglycase activity does not require glutathione as a cofactor, however, glycated glutathione constitutes a PARK7 substrate.. Sumoylated on Lys-130 by PIAS2 or PIAS4; which is enhanced after ultraviolet irradiation and essential for cell-growth promoting activity and transforming activity. In terms of processing, cys-106 is easily oxidized to sulfinic acid. Post-translationally, undergoes cleavage of a C-terminal peptide and subsequent activation of protease activity in response to oxidative stress. Highly expressed in pancreas, kidney, skeletal muscle, liver, testis and heart. Detected at slightly lower levels in placenta and brain (at protein level). Detected in astrocytes, Sertoli cells, spermatogonia, spermatids and spermatozoa. Expressed by pancreatic islets at higher levels than surrounding exocrine tissues.

The protein localises to the cell membrane. The protein resides in the cytoplasm. It is found in the nucleus. It localises to the membrane raft. Its subcellular location is the mitochondrion. The protein localises to the endoplasmic reticulum. It carries out the reaction N(omega)-(1-hydroxy-2-oxopropyl)-L-arginyl-[protein] + H2O = lactate + L-arginyl-[protein] + H(+). The catalysed reaction is N(6)-(1-hydroxy-2-oxopropyl)-L-lysyl-[protein] + H2O = lactate + L-lysyl-[protein] + H(+). It catalyses the reaction S-(1-hydroxy-2-oxopropyl)-L-cysteinyl-[protein] + H2O = lactate + L-cysteinyl-[protein] + H(+). The enzyme catalyses N(omega)-(1-hydroxy-2-oxoethyl)-L-arginyl-[protein] + H2O = L-arginyl-[protein] + glycolate + H(+). It carries out the reaction N(6)-(1-hydroxy-2-oxoethyl)-L-lysyl-[protein] + H2O = glycolate + L-lysyl-[protein] + H(+). The catalysed reaction is S-(1-hydroxy-2-oxoethyl)-L-cysteinyl-[protein] + H2O = glycolate + L-cysteinyl-[protein] + H(+). It catalyses the reaction N(2)-(1-hydroxy-2-oxopropyl)-dGTP + H2O = lactate + dGTP + H(+). The enzyme catalyses N(2)-(1-hydroxy-2-oxopropyl)-GTP + H2O = lactate + GTP + H(+). It carries out the reaction N(2)-(1-hydroxy-2-oxopropyl)-GDP + H2O = lactate + GDP + H(+). The catalysed reaction is N(2)-(1-hydroxy-2-oxopropyl)-GMP + H2O = lactate + GMP + H(+). It catalyses the reaction N(2)-(1-hydroxy-2-oxoethyl)-dGTP + H2O = dGTP + glycolate + H(+). The enzyme catalyses N(2)-(1-hydroxy-2-oxoethyl)-GTP + H2O = glycolate + GTP + H(+). It carries out the reaction N(2)-(1-hydroxy-2-oxoethyl)-GDP + H2O = glycolate + GDP + H(+). The catalysed reaction is N(2)-(1-hydroxy-2-oxoethyl)-GMP + H2O = glycolate + GMP + H(+). It catalyses the reaction an N(2)-(1-hydroxy-2-oxopropyl)-guanosine in RNA + H2O = a guanosine in RNA + lactate + H(+). The enzyme catalyses an N(2)-(1-hydroxy-2-oxopropyl)-2'-deoxyguanosine in DNA + H2O = a 2'-deoxyguanosine in DNA + lactate + H(+). It carries out the reaction an N(2)-(1-hydroxy-2-oxoethyl)-guanosine in RNA + H2O = a guanosine in RNA + glycolate + H(+). The catalysed reaction is an N(2)-(1-hydroxy-2-oxoethyl)-2'-deoxyguanosine in DNA + H2O = a 2'-deoxyguanosine in DNA + glycolate + H(+). Its function is as follows. Multifunctional protein with controversial molecular function which plays an important role in cell protection against oxidative stress and cell death acting as oxidative stress sensor and redox-sensitive chaperone and protease. It is involved in neuroprotective mechanisms like the stabilization of NFE2L2 and PINK1 proteins, male fertility as a positive regulator of androgen signaling pathway as well as cell growth and transformation through, for instance, the modulation of NF-kappa-B signaling pathway. Has been described as a protein and nucleotide deglycase that catalyzes the deglycation of the Maillard adducts formed between amino groups of proteins or nucleotides and reactive carbonyl groups of glyoxals. But this function is rebuted by other works. As a protein deglycase, repairs methylglyoxal- and glyoxal-glycated proteins, and releases repaired proteins and lactate or glycolate, respectively. Deglycates cysteine, arginine and lysine residues in proteins, and thus reactivates these proteins by reversing glycation by glyoxals. Acts on early glycation intermediates (hemithioacetals and aminocarbinols), preventing the formation of advanced glycation endproducts (AGE) that cause irreversible damage. Also functions as a nucleotide deglycase able to repair glycated guanine in the free nucleotide pool (GTP, GDP, GMP, dGTP) and in DNA and RNA. Is thus involved in a major nucleotide repair system named guanine glycation repair (GG repair), dedicated to reversing methylglyoxal and glyoxal damage via nucleotide sanitization and direct nucleic acid repair. Protects histones from adduction by methylglyoxal, controls the levels of methylglyoxal-derived argininine modifications on chromatin. Able to remove the glycations and restore histone 3, histone glycation disrupts both local and global chromatin architecture by altering histone-DNA interactions as well as histone acetylation and ubiquitination levels. Displays a very low glyoxalase activity that may reflect its deglycase activity. Eliminates hydrogen peroxide and protects cells against hydrogen peroxide-induced cell death. Required for correct mitochondrial morphology and function as well as for autophagy of dysfunctional mitochondria. Plays a role in regulating expression or stability of the mitochondrial uncoupling proteins SLC25A14 and SLC25A27 in dopaminergic neurons of the substantia nigra pars compacta and attenuates the oxidative stress induced by calcium entry into the neurons via L-type channels during pacemaking. Regulates astrocyte inflammatory responses, may modulate lipid rafts-dependent endocytosis in astrocytes and neuronal cells. In pancreatic islets, involved in the maintenance of mitochondrial reactive oxygen species (ROS) levels and glucose homeostasis in an age- and diet dependent manner. Protects pancreatic beta cells from cell death induced by inflammatory and cytotoxic setting. Binds to a number of mRNAs containing multiple copies of GG or CC motifs and partially inhibits their translation but dissociates following oxidative stress. Metal-binding protein able to bind copper as well as toxic mercury ions, enhances the cell protection mechanism against induced metal toxicity. In macrophages, interacts with the NADPH oxidase subunit NCF1 to direct NADPH oxidase-dependent ROS production, and protects against sepsis. This is Parkinson disease protein 7 from Homo sapiens (Human).